The following is an 886-amino-acid chain: Alanine--tRNA ligase (886 aa).

Zn(2+) contacts are provided by H568, H572, C670, and H674.

The protein belongs to the class-II aminoacyl-tRNA synthetase family. The cofactor is Zn(2+).

The protein resides in the cytoplasm. It catalyses the reaction tRNA(Ala) + L-alanine + ATP = L-alanyl-tRNA(Ala) + AMP + diphosphate. Catalyzes the attachment of alanine to tRNA(Ala) in a two-step reaction: alanine is first activated by ATP to form Ala-AMP and then transferred to the acceptor end of tRNA(Ala). Also edits incorrectly charged Ser-tRNA(Ala) and Gly-tRNA(Ala) via its editing domain. In Prochlorococcus marinus (strain NATL2A), this protein is Alanine--tRNA ligase.